Consider the following 358-residue polypeptide: Neuronal-specific septin-3 (358 aa).

Basic and acidic residues predominate over residues Met-1–Thr-10. A disordered region spans residues Met-1–Lys-30. The region spanning Thr-58–Asp-331 is the Septin-type G domain. The G1 motif stretch occupies residues Gly-68–Ser-75. Gly-68–Ser-75 provides a ligand contact to GTP. Position 91 is a phosphoserine (Ser-91). Thr-102 provides a ligand contact to GTP. The segment at Asp-125 to Gly-128 is G3 motif. The G4 motif stretch occupies residues Ala-207–Asp-210. Residues Lys-208–Glu-216, Gly-265, and Arg-280 each bind GTP.

Belongs to the TRAFAC class TrmE-Era-EngA-EngB-Septin-like GTPase superfamily. Septin GTPase family. Septins polymerize into heterooligomeric protein complexes that form filaments, and can associate with cellular membranes, actin filaments and microtubules. GTPase activity is required for filament formation. Post-translationally, phosphorylated by PKG on serine residues. Phosphorylated by PKG on Ser-91. As to expression, brain-specific.

The protein resides in the cytoplasm. Its subcellular location is the cytoskeleton. It is found in the synapse. Filament-forming cytoskeletal GTPase. May play a role in cytokinesis (Potential). The chain is Neuronal-specific septin-3 from Homo sapiens (Human).